The sequence spans 213 residues: Ras-like protein rasX (213 aa).

16 to 23 (GDGGVGKT) is a binding site for GTP. An Effector region motif is present at residues 38–46 (YDPTIEDSY). GTP contacts are provided by residues 63–67 (DTAGQ) and 122–125 (NKSD). Cysteine 210 carries the cysteine methyl ester modification. Cysteine 210 is lipidated: S-geranylgeranyl cysteine. Residues 211–213 (KMM) constitute a propeptide, removed in mature form.

It belongs to the small GTPase superfamily. Ras family.

It localises to the cell membrane. It carries out the reaction GTP + H2O = GDP + phosphate + H(+). In terms of biological role, ras proteins bind GDP/GTP and possess intrinsic GTPase activity. This chain is Ras-like protein rasX (rasX), found in Dictyostelium discoideum (Social amoeba).